Reading from the N-terminus, the 381-residue chain is Chorismate synthase (381 aa).

Residues arginine 41 and arginine 47 each contribute to the NADP(+) site. FMN is bound by residues 127-129, 247-248, glycine 291, 306-310, and arginine 332; these read RAS, QA, and KPIPT.

Belongs to the chorismate synthase family. Homotetramer. FMNH2 serves as cofactor.

It carries out the reaction 5-O-(1-carboxyvinyl)-3-phosphoshikimate = chorismate + phosphate. It participates in metabolic intermediate biosynthesis; chorismate biosynthesis; chorismate from D-erythrose 4-phosphate and phosphoenolpyruvate: step 7/7. In terms of biological role, catalyzes the anti-1,4-elimination of the C-3 phosphate and the C-6 proR hydrogen from 5-enolpyruvylshikimate-3-phosphate (EPSP) to yield chorismate, which is the branch point compound that serves as the starting substrate for the three terminal pathways of aromatic amino acid biosynthesis. This reaction introduces a second double bond into the aromatic ring system. This is Chorismate synthase from Anaeromyxobacter dehalogenans (strain 2CP-C).